Reading from the N-terminus, the 1288-residue chain is Mitogen-activated protein kinase kinase kinase 6 (1288 aa).

The 259-residue stretch at 648–906 folds into the Protein kinase domain; sequence TGERLVLGKG…AQTLLGDPFL (259 aa). ATP-binding positions include 654–662 and K677; that span reads LGKGTYGVV. The active-site Proton acceptor is the D771. At T806 the chain carries Phosphothreonine. The segment at 899–997 is disordered; sequence TLLGDPFLQP…SSGLSLLHQE (99 aa). Low complexity predominate over residues 914 to 952; the sequence is SPSSPRHAPRPSDAPSASPTPSANSTTQSQTFPCPQAPS. Phosphoserine is present on residues S964 and S984. The segment covering 980–989 has biased composition (low complexity); that stretch reads EEPASPEESS. Residues 1004–1029 adopt a coiled-coil conformation; sequence LAAVLEQELPALAENLHQEQKQEQGA. The segment covering 1123 to 1134 has biased composition (basic and acidic residues); sequence VEKEAVSPRSEE. The disordered stretch occupies residues 1123–1157; sequence VEKEAVSPRSEELSNEGDSQQSPGQQSPLPVEPEQ. Phosphoserine is present on residues S1129 and S1149. Over residues 1141 to 1151 the composition is skewed to low complexity; it reads SQQSPGQQSPL. Positions 1166–1205 form a coiled coil; the sequence is LSLLRAETDRLREILAGKEREYQALVQRALQRLNEEARTY.

Belongs to the protein kinase superfamily. STE Ser/Thr protein kinase family. MAP kinase kinase kinase subfamily. Binds both upstream activators and downstream substrates in multimolecular complexes. Mg(2+) serves as cofactor.

The catalysed reaction is L-seryl-[protein] + ATP = O-phospho-L-seryl-[protein] + ADP + H(+). It carries out the reaction L-threonyl-[protein] + ATP = O-phospho-L-threonyl-[protein] + ADP + H(+). With respect to regulation, activated by phosphorylation on Thr-806. Catalytically active only when complexed with MAP3K5, with MAP3K5 supporting the stability and the active configuration of MAP3K6 and MAP3K6 activating MAP3K5 by direct phosphorylation. Functionally, component of a protein kinase signal transduction cascade. Activates the JNK, but not ERK or p38 kinase pathways. The chain is Mitogen-activated protein kinase kinase kinase 6 (MAP3K6) from Homo sapiens (Human).